The chain runs to 253 residues: Small ribosomal subunit protein uS5 (253 aa).

Positions 1 to 30 (MAESAPRGFGRGGRGGRGRGRGRRGAKRDE) are disordered. Residues 14-26 (RGGRGRGRGRRGA) show a composition bias toward basic residues. Positions 75 to 138 (LNDEVMKVVP…IMGKLSIMPI (64 aa)) constitute an S5 DRBM domain.

The protein belongs to the universal ribosomal protein uS5 family. In terms of assembly, component of the small ribosomal subunit (SSU). Mature yeast ribosomes consist of a small (40S) and a large (60S) subunit. The 40S small subunit contains 1 molecule of ribosomal RNA (18S rRNA) and at least 33 different proteins. The large 60S subunit contains 3 rRNA molecules (25S, 5.8S and 5S rRNA) and at least 46 different proteins. Interacts with snoRNA U3. Interacts with MPP10. Component of the ribosomal small subunit (SSU) processome composed of at least 40 protein subunits and snoRNA U3.

The protein localises to the cytoplasm. Component of the ribosome, a large ribonucleoprotein complex responsible for the synthesis of proteins in the cell. The small ribosomal subunit (SSU) binds messenger RNAs (mRNAs) and translates the encoded message by selecting cognate aminoacyl-transfer RNA (tRNA) molecules. The large subunit (LSU) contains the ribosomal catalytic site termed the peptidyl transferase center (PTC), which catalyzes the formation of peptide bonds, thereby polymerizing the amino acids delivered by tRNAs into a polypeptide chain. The nascent polypeptides leave the ribosome through a tunnel in the LSU and interact with protein factors that function in enzymatic processing, targeting, and the membrane insertion of nascent chains at the exit of the ribosomal tunnel. Plays a role in the assembly and function of the 40S ribosomal subunit. Mutations in this protein affects the control of translational fidelity. Involved in nucleolar processing of pre-18S ribosomal RNA and ribosome assembly. Its function is as follows. Component of the ribosome, a large ribonucleoprotein complex responsible for the synthesis of proteins in the cell. The small ribosomal subunit (SSU) binds messenger RNAs (mRNAs) and translates the encoded message by selecting cognate aminoacyl-transfer RNA (tRNA) molecules. The large subunit (LSU) contains the ribosomal catalytic site termed the peptidyl transferase center (PTC), which catalyzes the formation of peptide bonds, thereby polymerizing the amino acids delivered by tRNAs into a polypeptide chain. The nascent polypeptides leave the ribosome through a tunnel in the LSU and interact with protein factors that function in enzymatic processing, targeting, and the membrane insertion of nascent chains at the exit of the ribosomal tunnel. uS5 is important for the assembly and function of the 40S ribosomal subunit. Mutations in this protein affects the control of translational fidelity. Involved in nucleolar processing of pre-18S ribosomal RNA and ribosome assembly. The chain is Small ribosomal subunit protein uS5 (rps2) from Schizosaccharomyces pombe (strain 972 / ATCC 24843) (Fission yeast).